The following is a 319-amino-acid chain: Ferrochelatase (319 aa).

Residues His193 and Glu274 each coordinate Fe cation.

It belongs to the ferrochelatase family.

The protein localises to the cytoplasm. It catalyses the reaction heme b + 2 H(+) = protoporphyrin IX + Fe(2+). It functions in the pathway porphyrin-containing compound metabolism; protoheme biosynthesis; protoheme from protoporphyrin-IX: step 1/1. Catalyzes the ferrous insertion into protoporphyrin IX. The protein is Ferrochelatase of Actinobacillus pleuropneumoniae serotype 7 (strain AP76).